The sequence spans 332 residues: 2,3-diketo-L-gulonate reductase (332 aa).

Catalysis depends on histidine 44, which acts as the Proton donor. NAD(+)-binding positions include isoleucine 168–serine 174, tryptophan 224–lysine 225, and glycine 304–glutamate 306.

This sequence belongs to the LDH2/MDH2 oxidoreductase family. DlgD subfamily. Homodimer.

It localises to the cytoplasm. It carries out the reaction 3-dehydro-L-gulonate + NAD(+) = 2,3-dioxo-L-gulonate + NADH + H(+). The catalysed reaction is 3-dehydro-L-gulonate + NADP(+) = 2,3-dioxo-L-gulonate + NADPH + H(+). Catalyzes the reduction of 2,3-diketo-L-gulonate in the presence of NADH, to form 3-keto-L-gulonate. This chain is 2,3-diketo-L-gulonate reductase, found in Citrobacter koseri (strain ATCC BAA-895 / CDC 4225-83 / SGSC4696).